We begin with the raw amino-acid sequence, 388 residues long: S-adenosylmethionine synthase (388 aa).

His16 lines the ATP pocket. Position 18 (Asp18) interacts with Mg(2+). Glu44 is a binding site for K(+). The L-methionine site is built by Glu57 and Gln100. The interval Gln100–Arg110 is flexible loop. Residues Asp165–Lys167, Asp240, Arg246–Lys247, Ala263, and Lys267 contribute to the ATP site. Residue Asp240 coordinates L-methionine. An L-methionine-binding site is contributed by Lys271.

This sequence belongs to the AdoMet synthase family. Homotetramer; dimer of dimers. Requires Mg(2+) as cofactor. K(+) serves as cofactor.

It is found in the cytoplasm. The catalysed reaction is L-methionine + ATP + H2O = S-adenosyl-L-methionine + phosphate + diphosphate. Its pathway is amino-acid biosynthesis; S-adenosyl-L-methionine biosynthesis; S-adenosyl-L-methionine from L-methionine: step 1/1. In terms of biological role, catalyzes the formation of S-adenosylmethionine (AdoMet) from methionine and ATP. The overall synthetic reaction is composed of two sequential steps, AdoMet formation and the subsequent tripolyphosphate hydrolysis which occurs prior to release of AdoMet from the enzyme. The chain is S-adenosylmethionine synthase from Acinetobacter baumannii (strain AYE).